We begin with the raw amino-acid sequence, 131 residues long: Small ribosomal subunit protein uS8 (131 aa).

It belongs to the universal ribosomal protein uS8 family. As to quaternary structure, part of the 30S ribosomal subunit. Contacts proteins S5 and S12.

Its function is as follows. One of the primary rRNA binding proteins, it binds directly to 16S rRNA central domain where it helps coordinate assembly of the platform of the 30S subunit. The protein is Small ribosomal subunit protein uS8 of Sulfurovum sp. (strain NBC37-1).